Consider the following 655-residue polypeptide: Probable inactive receptor kinase At1g48480 (655 aa).

Positions 1–32 (MRVFFFPNSSMAILSVFLSLLLLSLPLPSTQD) are cleaved as a signal peptide. 6 LRR repeats span residues 71–95 (SNRV…IFGN), 98–120 (QLRT…LSTS), 122–144 (NLRH…LFSL), 146–169 (HLVR…TNLT), 170–192 (KLKT…DLPL), and 194–215 (QFNV…RFES). Residues 234 to 260 (EETVPSQPTSGGNRTPPSVEGSEEKKK) are disordered. Residues 237 to 249 (VPSQPTSGGNRTP) show a composition bias toward polar residues. Residues 269–289 (IAGIVIGCVVGFALIVLILMV) form a helical membrane-spanning segment. Positions 371–646 (RASAEVLGKG…RKMENLRPYS (276 aa)) constitute a Protein kinase domain. The residue at position 373 (Ser373) is a Phosphoserine. ATP is bound at residue 377-385 (LGKGTFGTA). Phosphothreonine is present on Thr394. Lys399 provides a ligand contact to ATP. Ser450 carries the post-translational modification Phosphoserine. Thr526 is modified (phosphothreonine). Ser546 carries the phosphoserine modification. Thr622 is modified (phosphothreonine).

Belongs to the protein kinase superfamily. In terms of tissue distribution, highly expressed in seedlings and leaves. Lower expression in roots, stems, flowers and siliques. Detected in the vascular tissues of roots, in the trichomes of young rosettes leaves and hydathodes, in the floral abscission zones, in filament apex and stomata cells of anthers, in inflorescence stems and in sepals.

The protein localises to the cell membrane. The sequence is that of Probable inactive receptor kinase At1g48480 (RKL1) from Arabidopsis thaliana (Mouse-ear cress).